Consider the following 706-residue polypeptide: Fatty acid oxidation complex subunit alpha (706 aa).

The interval 1–188 (MEKTFNLTRR…KMGLVNDVVP (188 aa)) is enoyl-CoA hydratase. The interval 308-706 (RKVKKAVILG…TMARENVSFF (399 aa)) is 3-hydroxyacyl-CoA dehydrogenase.

This sequence in the N-terminal section; belongs to the enoyl-CoA hydratase/isomerase family. It in the central section; belongs to the 3-hydroxyacyl-CoA dehydrogenase family. Heterotetramer of two alpha chains (FadJ) and two beta chains (FadI).

It is found in the cytoplasm. It carries out the reaction a (3S)-3-hydroxyacyl-CoA = a (2E)-enoyl-CoA + H2O. It catalyses the reaction a 4-saturated-(3S)-3-hydroxyacyl-CoA = a (3E)-enoyl-CoA + H2O. The enzyme catalyses a (3S)-3-hydroxyacyl-CoA + NAD(+) = a 3-oxoacyl-CoA + NADH + H(+). The catalysed reaction is (3S)-3-hydroxybutanoyl-CoA = (3R)-3-hydroxybutanoyl-CoA. It functions in the pathway lipid metabolism; fatty acid beta-oxidation. Catalyzes the formation of a hydroxyacyl-CoA by addition of water on enoyl-CoA. Also exhibits 3-hydroxyacyl-CoA epimerase and 3-hydroxyacyl-CoA dehydrogenase activities. The protein is Fatty acid oxidation complex subunit alpha of Shewanella sp. (strain W3-18-1).